A 375-amino-acid polypeptide reads, in one-letter code: MKVDGIHRRTIWVDADGWSVGIIDQTALPFEFRTRRLTSLEEAAEAITTMAVRGAPLIGVTAAYGMALAMRADATDRAVEAAHDRLLATRPTAVNLRWGLARLREVLSVTPPADRVRRAYAEAAAIAEEDVEVCRAIGRHGMELIRGLHKRNPHRPVNLLTHCNAGWLATVDWGTATAPIYMAHDAGIPVHVWVDETRPRSQGAFLTAWELGHHGVPHTVVADNTGGHLMQHGLVDLAVVGTDRVTARGDVANKIGTYLKALAAHDTGVPFWVALPGSTIDWLLEDGVHGIPIETRGDEEVTEITGRTADGRIERVRIVADGSPVANYGFDVTPARLVTGFITERGLCAASQEGLAGLFPDQAERSARQRVANDA.

Substrate-binding positions include 53–55, arginine 90, and glutamine 202; that span reads RGA. Aspartate 243 functions as the Proton donor in the catalytic mechanism. Substrate is bound at residue 253–254; that stretch reads NK.

This sequence belongs to the eIF-2B alpha/beta/delta subunits family. MtnA subfamily.

The enzyme catalyses 5-(methylsulfanyl)-alpha-D-ribose 1-phosphate = 5-(methylsulfanyl)-D-ribulose 1-phosphate. Its pathway is amino-acid biosynthesis; L-methionine biosynthesis via salvage pathway; L-methionine from S-methyl-5-thio-alpha-D-ribose 1-phosphate: step 1/6. Functionally, catalyzes the interconversion of methylthioribose-1-phosphate (MTR-1-P) into methylthioribulose-1-phosphate (MTRu-1-P). This chain is Methylthioribose-1-phosphate isomerase, found in Rhodospirillum centenum (strain ATCC 51521 / SW).